The primary structure comprises 1183 residues: Putative ATP-dependent RNA helicase PB1A10.06c (1183 aa).

2 disordered regions span residues 1-92 (MGRL…KKRL) and 165-315 (ETTT…RASR). Residues 60–81 (VPKEERQKRKQELKDQLLKENE) are compositionally biased toward basic and acidic residues. Low complexity-rich tracts occupy residues 165–176 (ETTTTKSSTAET) and 184–196 (TRSG…STGT). Positions 224 to 251 (EDPEYDSAEEDYLSTDSEEFSEDSDNSS) are enriched in acidic residues. Residues 252 to 270 (EENKDTNEPSTKDAEKTVP) show a composition bias toward basic and acidic residues. Over residues 292 to 308 (ENEDFDLETSEDDSSDD) the composition is skewed to acidic residues. The region spanning 408-585 (MEQIFANDVV…KLLFSVPPPI (178 aa)) is the Helicase ATP-binding domain. Residue 421 to 428 (GATGSGKT) coordinates ATP. The DEAH box signature appears at 522-525 (DEAH). The Helicase C-terminal domain occupies 611 to 831 (AFDKVCLIHK…SIVLQMKNMN (221 aa)). The segment covering 673–683 (EDLQSETEDID) has biased composition (acidic residues). A disordered region spans residues 673 to 696 (EDLQSETEDIDQVPTSSSSSVTYD).

This sequence belongs to the DEAD box helicase family. DEAH subfamily.

It is found in the nucleus. Its subcellular location is the nucleolus. The enzyme catalyses ATP + H2O = ADP + phosphate + H(+). This Schizosaccharomyces pombe (strain 972 / ATCC 24843) (Fission yeast) protein is Putative ATP-dependent RNA helicase PB1A10.06c.